The following is a 550-amino-acid chain: MFCVQCEQTIRTPAGNGCSYAQGMCGKTAETSDLQDLLIAALQGLSAWAVKAREYGIINHDVDNFAPRSFFSTLTNVNFDSPRIVGYAREAIALREALKAQCLSVDANAHCDNPMADLQLVSDDLGELQRQAAEFTPNKDKAAIGENILGLRLLCLYGLKGAAAYMEHAHVLGQYDNDIYAQYHKIMAWLGTWPADMNALLECAMEIGQMNFKVMSILDAGETTKYGHPTPTQVNVKATEGKCILISGHDLKDLYNLLEQTEGTGVNVYTHGEMLPAHGYPELRKFKHLVGNYGSGWQNQQVEFARFPGPIVMTSNCIIDPTVGSYDDRIWTRSIVGWPGVSHLEGDDFGPVIAQAQQMAGFPYSEIPHLITVGFGRQTLLGAADTLIDLVSREKLRHIFLVGGCDGARGERNYFTDFATSVPDDCLILTLACGKYRFNKLEFGDIEGLPRLVDAGQCNDAYSAIILAVTLAEKLGCGVNDLPLSLVLSWFEQKAIVILLTLLSLGVKNIVTGPTAPGFFTPDLLAVLNEKFGLRSVTTVEEDMKQLLSA.

Residues cysteine 3, cysteine 6, cysteine 18, and cysteine 25 each contribute to the [2Fe-2S] cluster site. Histidine 249, glutamate 273, cysteine 317, cysteine 405, cysteine 433, cysteine 458, glutamate 492, and lysine 494 together coordinate hybrid [4Fe-2O-2S] cluster. Cysteine 405 bears the Cysteine persulfide mark.

The protein belongs to the HCP family. Requires [2Fe-2S] cluster as cofactor. Hybrid [4Fe-2O-2S] cluster is required as a cofactor.

It is found in the cytoplasm. It catalyses the reaction A + NH4(+) + H2O = hydroxylamine + AH2 + H(+). Catalyzes the reduction of hydroxylamine to form NH(3) and H(2)O. The protein is Hydroxylamine reductase of Salmonella gallinarum (strain 287/91 / NCTC 13346).